Here is a 205-residue protein sequence, read N- to C-terminus: DNA-directed RNA polymerase RPB5 homolog (205 aa).

This sequence belongs to the archaeal RpoH/eukaryotic RPB5 RNA polymerase subunit family. In terms of assembly, part of the viral DNA-directed RNA polymerase that consists of 8 polII-like subunits (RPB1, RPB2, RPB3, RPB5, RPB6, RPB7, RPB9, RPB10), a capping enzyme and a termination factor.

Its subcellular location is the host cytoplasm. The protein localises to the virion. Functionally, component of the DNA-directed RNA polymerase (RNAP) that catalyzes the transcription in the cytoplasm of viral DNA into RNA using the four ribonucleoside triphosphates as substrates. The polypeptide is DNA-directed RNA polymerase RPB5 homolog (Ornithodoros (relapsing fever ticks)).